Here is a 56-residue protein sequence, read N- to C-terminus: UPF0391 membrane protein Noc_0482 (56 aa).

2 helical membrane passes run 1-21 (MFGW…FGFT) and 29-49 (HIAW…LLLG).

The protein belongs to the UPF0391 family.

It localises to the cell membrane. The chain is UPF0391 membrane protein Noc_0482 from Nitrosococcus oceani (strain ATCC 19707 / BCRC 17464 / JCM 30415 / NCIMB 11848 / C-107).